A 389-amino-acid polypeptide reads, in one-letter code: Galactokinase (389 aa).

Substrate is bound at residue 33 to 36; that stretch reads EHTD. Residues Ser67 and 124-130 contribute to the ATP site; that span reads GAGLSSS. Mg(2+) contacts are provided by Ser130 and Glu162. Catalysis depends on Asp174, which acts as the Proton acceptor. Tyr224 serves as a coordination point for substrate.

Belongs to the GHMP kinase family. GalK subfamily.

It is found in the cytoplasm. The catalysed reaction is alpha-D-galactose + ATP = alpha-D-galactose 1-phosphate + ADP + H(+). It functions in the pathway carbohydrate metabolism; galactose metabolism. In terms of biological role, catalyzes the transfer of the gamma-phosphate of ATP to D-galactose to form alpha-D-galactose-1-phosphate (Gal-1-P). The sequence is that of Galactokinase from Fusobacterium nucleatum subsp. nucleatum (strain ATCC 25586 / DSM 15643 / BCRC 10681 / CIP 101130 / JCM 8532 / KCTC 2640 / LMG 13131 / VPI 4355).